The chain runs to 77 residues: uncharacterized protein (77 aa).

The interval 56-77 is disordered; it reads SVIPKQQPPSSAAAISESEFED. Positions 65-77 are enriched in low complexity; it reads SSAAAISESEFED.

This is an uncharacterized protein from Frog virus 3 (isolate Goorha) (FV-3).